A 378-amino-acid chain; its full sequence is Histidine decarboxylase (378 aa).

H120 is a substrate binding site. K233 is subject to N6-(pyridoxal phosphate)lysine.

The protein belongs to the group II decarboxylase family. As to quaternary structure, homotetramer. Requires pyridoxal 5'-phosphate as cofactor.

It catalyses the reaction L-histidine + H(+) = histamine + CO2. The chain is Histidine decarboxylase (hdc) from Klebsiella aerogenes (Enterobacter aerogenes).